The following is a 351-amino-acid chain: Phosphate acyltransferase (351 aa).

The protein belongs to the PlsX family. Homodimer. Probably interacts with PlsY.

The protein resides in the cytoplasm. The catalysed reaction is a fatty acyl-[ACP] + phosphate = an acyl phosphate + holo-[ACP]. Its pathway is lipid metabolism; phospholipid metabolism. Functionally, catalyzes the reversible formation of acyl-phosphate (acyl-PO(4)) from acyl-[acyl-carrier-protein] (acyl-ACP). This enzyme utilizes acyl-ACP as fatty acyl donor, but not acyl-CoA. This is Phosphate acyltransferase from Gloeothece citriformis (strain PCC 7424) (Cyanothece sp. (strain PCC 7424)).